The chain runs to 295 residues: ATP synthase gamma chain (295 aa).

It belongs to the ATPase gamma chain family. F-type ATPases have 2 components, CF(1) - the catalytic core - and CF(0) - the membrane proton channel. CF(1) has five subunits: alpha(3), beta(3), gamma(1), delta(1), epsilon(1). CF(0) has three main subunits: a, b and c.

It is found in the cell inner membrane. Functionally, produces ATP from ADP in the presence of a proton gradient across the membrane. The gamma chain is believed to be important in regulating ATPase activity and the flow of protons through the CF(0) complex. In Sulfurimonas denitrificans (strain ATCC 33889 / DSM 1251) (Thiomicrospira denitrificans (strain ATCC 33889 / DSM 1251)), this protein is ATP synthase gamma chain.